Here is a 159-residue protein sequence, read N- to C-terminus: Ribosomal RNA large subunit methyltransferase H (159 aa).

S-adenosyl-L-methionine-binding positions include leucine 76, glycine 108, and 127-132; that span reads FGLLTL.

It belongs to the RNA methyltransferase RlmH family. In terms of assembly, homodimer.

It localises to the cytoplasm. The enzyme catalyses pseudouridine(1915) in 23S rRNA + S-adenosyl-L-methionine = N(3)-methylpseudouridine(1915) in 23S rRNA + S-adenosyl-L-homocysteine + H(+). Functionally, specifically methylates the pseudouridine at position 1915 (m3Psi1915) in 23S rRNA. The protein is Ribosomal RNA large subunit methyltransferase H of Streptococcus pyogenes serotype M5 (strain Manfredo).